We begin with the raw amino-acid sequence, 227 residues long: Large ribosomal subunit protein uL3 (227 aa).

The residue at position 151 (Gln-151) is an N5-methylglutamine.

This sequence belongs to the universal ribosomal protein uL3 family. In terms of assembly, part of the 50S ribosomal subunit. Forms a cluster with proteins L14 and L19. Post-translationally, methylated by PrmB.

One of the primary rRNA binding proteins, it binds directly near the 3'-end of the 23S rRNA, where it nucleates assembly of the 50S subunit. The sequence is that of Large ribosomal subunit protein uL3 from Gluconacetobacter diazotrophicus (strain ATCC 49037 / DSM 5601 / CCUG 37298 / CIP 103539 / LMG 7603 / PAl5).